Here is an 875-residue protein sequence, read N- to C-terminus: Acetyl-coenzyme A carboxylase carboxyl transferase subunit alpha, chloroplastic (875 aa).

Residues 1 to 50 (MASSSATLVGSTASDLLRSSTTGFTGVPLRTLGRAGLVLKRRDLTVSVTA) constitute a chloroplast transit peptide. Residues 128 to 380 (EAKYQKALVE…KIAINEAMDE (253 aa)) enclose the CoA carboxyltransferase C-terminal domain. Residues 664-705 (LLLDKNKAATRKQELKKKSDEHKEAARLEQELKKKFDEVMDT) are a coiled coil. Residues 845-875 (KEKYENLTRPAGDTLTDDKLREKVGVNRNFS) form a disordered region. The segment covering 860–869 (TDDKLREKVG) has biased composition (basic and acidic residues).

This sequence belongs to the AccA family. Acetyl-CoA carboxylase is a heterohexamer composed of biotin carboxyl carrier protein, biotin carboxylase and two subunits each of ACCase subunit alpha and ACCase plastid-coded subunit beta (accD).

The protein localises to the plastid. It localises to the chloroplast inner membrane. The enzyme catalyses N(6)-carboxybiotinyl-L-lysyl-[protein] + acetyl-CoA = N(6)-biotinyl-L-lysyl-[protein] + malonyl-CoA. It participates in lipid metabolism; malonyl-CoA biosynthesis; malonyl-CoA from acetyl-CoA: step 1/1. With respect to regulation, activated by reductants such as dithiothreitol (DTT), and by thioredoxin in vivo, following exposure to light. Component of the acetyl coenzyme A carboxylase (ACC) complex. First, biotin carboxylase catalyzes the carboxylation of biotin on its carrier protein (BCCP) and then the CO(2) group is transferred by the carboxyltransferase to acetyl-CoA to form malonyl-CoA. This Pisum sativum (Garden pea) protein is Acetyl-coenzyme A carboxylase carboxyl transferase subunit alpha, chloroplastic (ACCA).